The following is a 412-amino-acid chain: GATOR complex protein NPRL2 (412 aa).

Belongs to the NPR2 family. Component of the GATOR complex consisting of mio, Nup44A/Seh1, Im11, Nplr3, Nplr2, Wdr24, Wdr59 and Sec13. Within the GATOR complex, probable component of the GATOR1 subcomplex which is likely composed of Iml1, Nplr2 and Nplr3. Interacts with Nprl3.

It localises to the cytoplasm. It is found in the lysosome. Functionally, an essential component of the GATOR subcomplex GATOR1 which functions as an inhibitor of the amino acid-sensing branch of the TORC1 signaling pathway. The two GATOR subcomplexes, GATOR1 and GATOR2, regulate the TORC1 pathway in order to mediate metabolic homeostasis, female gametogenesis and the response to amino acid limitation and complete starvation. The function of GATOR1 in negatively regulating the TORC1 pathway is essential for maintaining baseline levels of TORC1 activity under nutrient rich conditions, and for promoting survival during amino acid or complete starvation by inhibiting TORC1-dependent cell growth and promoting catabolic metabolism and autophagy. In addition, this inhibition of TORC1 is necessary to maintain female fertility under normal conditions and during periods of nutrient stress. GATOR1 and GATOR2 act at different stages of oogenesis to regulate TORC1 in order to control meiotic entry and promote oocyte growth and development. After exactly four mitotic cyst divisions, the GATOR1 complex members (Iml1, Nprl2 and Nprl3) down-regulate TORC1 to slow cellular metabolism and promote the mitotic/meiotic transition. At later stages of oogenesis, the mio and Nup44A components of the GATOR2 complex inhibit GATOR1 and thus activate TORC1 to promote meiotic progression, and drive oocyte growth and development. This is GATOR complex protein NPRL2 from Drosophila melanogaster (Fruit fly).